Reading from the N-terminus, the 1090-residue chain is UPF0507 protein C1Q_01007 (1090 aa).

The 148-residue stretch at 289-436 folds into the VPS9 domain; the sequence is FSVNQLLTDF…FEDFNKNTGN (148 aa).

It belongs to the UPF0507 family.

This Saccharomyces cerevisiae (strain JAY291) (Baker's yeast) protein is UPF0507 protein C1Q_01007.